Consider the following 397-residue polypeptide: Myb family transcription factor PHL4 (397 aa).

Positions 1–27 are disordered; sequence MIPNDDDDANSMKNYPLNDDDANSMKN. Positions 228-288 constitute an HTH myb-type domain; that stretch reads AAAKGRMRWT…HLQKYRTAKY (61 aa). A DNA-binding region (H-T-H motif) is located at residues 259–284; the sequence is PKGVLKHMKVEGLTIFHVKSHLQKYR. Positions 319 to 339 are coiled coil; that stretch reads TETLRIQMEHQKKLHEQLESL. The LHEQLE motif lies at 332–337; that stretch reads LHEQLE. A disordered region spans residues 359 to 397; it reads KQNMGFGGPEQGEKTSAKTPENGSEESESPRPKRPRNEE. The span at 386–397 shows a compositional bias: basic and acidic residues; the sequence is ESPRPKRPRNEE. At serine 387 the chain carries Phosphoserine.

This sequence belongs to the MYB-CC family.

It localises to the nucleus. Its function is as follows. Transcription factor involved in male gametophyte development. The sequence is that of Myb family transcription factor PHL4 from Arabidopsis thaliana (Mouse-ear cress).